The chain runs to 184 residues: Non-fimbrial adhesin 1 (184 aa).

Residues 1 to 28 (MKAKKYENQIYNENGRRCQRHGRRLAIA) form the signal peptide. A disulfide bond links C57 and C91.

As to quaternary structure, forms a polymeric structure, which disintegrates with elevated temperature into a monomer but with some relatively stable dimers.

The sequence is that of Non-fimbrial adhesin 1 (nfaA) from Escherichia coli.